A 289-amino-acid chain; its full sequence is Diaminopimelate epimerase (289 aa).

Positions 15 and 76 each coordinate substrate. Cysteine 85 serves as the catalytic Proton donor. Substrate is bound by residues 86–87 (GN), asparagine 158, asparagine 191, and 209–210 (ER). Cysteine 218 (proton acceptor) is an active-site residue. 219–220 (GT) contributes to the substrate binding site.

The protein belongs to the diaminopimelate epimerase family. Homodimer.

It is found in the cytoplasm. The catalysed reaction is (2S,6S)-2,6-diaminopimelate = meso-2,6-diaminopimelate. The protein operates within amino-acid biosynthesis; L-lysine biosynthesis via DAP pathway; DL-2,6-diaminopimelate from LL-2,6-diaminopimelate: step 1/1. Functionally, catalyzes the stereoinversion of LL-2,6-diaminopimelate (L,L-DAP) to meso-diaminopimelate (meso-DAP), a precursor of L-lysine and an essential component of the bacterial peptidoglycan. The protein is Diaminopimelate epimerase of Streptomyces coelicolor (strain ATCC BAA-471 / A3(2) / M145).